Here is a 435-residue protein sequence, read N- to C-terminus: IAA-amino acid hydrolase ILR1-like 5 (435 aa).

The first 25 residues, 1–25, serve as a signal peptide directing secretion; the sequence is MSFCKLVSFVLILHLLNSCLISCSS. Positions 134, 136, 170, 194, and 397 each coordinate Mn(2+). The Prevents secretion from ER motif lies at 432–435; that stretch reads KDEL.

Belongs to the peptidase M20 family.

Its subcellular location is the endoplasmic reticulum lumen. Its function is as follows. Hydrolyzes certain amino acid conjugates of the plant growth regulator indole-3-acetic acid (IAA). The sequence is that of IAA-amino acid hydrolase ILR1-like 5 from Arabidopsis thaliana (Mouse-ear cress).